Consider the following 438-residue polypeptide: 3-phosphoshikimate 1-carboxyvinyltransferase (438 aa).

3 residues coordinate 3-phosphoshikimate: Lys21, Ser22, and Arg26. Lys21 is a binding site for phosphoenolpyruvate. Phosphoenolpyruvate contacts are provided by Gly95 and Arg123. Ser167, Gln169, Asp315, and Lys342 together coordinate 3-phosphoshikimate. A phosphoenolpyruvate-binding site is contributed by Gln169. The active-site Proton acceptor is the Asp315. Residues Arg346 and Arg387 each contribute to the phosphoenolpyruvate site.

Belongs to the EPSP synthase family. In terms of assembly, monomer.

The protein localises to the cytoplasm. The catalysed reaction is 3-phosphoshikimate + phosphoenolpyruvate = 5-O-(1-carboxyvinyl)-3-phosphoshikimate + phosphate. It participates in metabolic intermediate biosynthesis; chorismate biosynthesis; chorismate from D-erythrose 4-phosphate and phosphoenolpyruvate: step 6/7. In terms of biological role, catalyzes the transfer of the enolpyruvyl moiety of phosphoenolpyruvate (PEP) to the 5-hydroxyl of shikimate-3-phosphate (S3P) to produce enolpyruvyl shikimate-3-phosphate and inorganic phosphate. This Coxiella burnetii (strain CbuG_Q212) (Coxiella burnetii (strain Q212)) protein is 3-phosphoshikimate 1-carboxyvinyltransferase.